A 396-amino-acid chain; its full sequence is MSKEKFARTKPHCNVGTIGHVDHGKTSLTAAITKVLAEAGGATFQAYDQIDKAPEERARGITISTAHVEYETEARHYAHVDCPGHADYVKNMITGAAQMDGAILVVSAADGPMPQTREHILLARQVGVPALVVFLNKCDMVDDEELLELVELEVRELLTSYDFPGDDIPIIKGSALAALEDSDQKLGHDAILELMKAVDDYIPQPERPKDKPFLMPIEDVFSISGRGTVVTGRVERGIVKVGEEIEIIGIRDTQKTTCTGVEMFRKLLDQGEAGDNIGALLRGTKRDDVERGQVLAKPGSITPHTKFKCEAYILTKEEGGRHTPFFSNYRPQFYFRTTDVTGTIELPEGTEMVMPGDNIGMTVQLIAPIAMDEGLRFAIREGGRTVGAGVVASIVQ.

The tr-type G domain maps to 10-206; the sequence is KPHCNVGTIG…AVDDYIPQPE (197 aa). The interval 19–26 is G1; it reads GHVDHGKT. 19-26 contributes to the GTP binding site; that stretch reads GHVDHGKT. Position 26 (T26) interacts with Mg(2+). The tract at residues 60 to 64 is G2; it reads GITIS. Residues 81–84 form a G3 region; the sequence is DCPG. GTP-binding positions include 81–85 and 136–139; these read DCPGH and NKCD. The tract at residues 136–139 is G4; sequence NKCD. The tract at residues 174–176 is G5; that stretch reads SAL.

The protein belongs to the TRAFAC class translation factor GTPase superfamily. Classic translation factor GTPase family. EF-Tu/EF-1A subfamily. Monomer.

The protein resides in the cytoplasm. The enzyme catalyses GTP + H2O = GDP + phosphate + H(+). Functionally, GTP hydrolase that promotes the GTP-dependent binding of aminoacyl-tRNA to the A-site of ribosomes during protein biosynthesis. This chain is Elongation factor Tu 2, found in Rhodospirillum rubrum (strain ATCC 11170 / ATH 1.1.1 / DSM 467 / LMG 4362 / NCIMB 8255 / S1).